A 460-amino-acid polypeptide reads, in one-letter code: 25S rRNA (cytosine-C(5))-methyltransferase rcm1 (460 aa).

Residues 223 to 229 (CAAPGNK), glutamate 246, aspartate 273, and aspartate 293 contribute to the S-adenosyl-L-methionine site. Catalysis depends on cysteine 350, which acts as the Nucleophile. The segment covering 430-439 (KMYKNDDDTK) has biased composition (basic and acidic residues). The interval 430-460 (KMYKNDDDTKKRKRKKKKKEVKKKARIQGEE) is disordered. Residues 440-460 (KRKRKKKKKEVKKKARIQGEE) are compositionally biased toward basic residues.

It belongs to the class I-like SAM-binding methyltransferase superfamily. RsmB/NOP family. Interacts with trm112.

Its subcellular location is the nucleus. It localises to the nucleolus. The enzyme catalyses a cytidine in 25S rRNA + S-adenosyl-L-methionine = a 5-methylcytidine in 25S rRNA + S-adenosyl-L-homocysteine + H(+). Functionally, S-adenosyl-L-methionine-dependent methyltransferase that specifically methylates the C(5) position of a cytosine in 25S rRNA. This Schizosaccharomyces pombe (strain 972 / ATCC 24843) (Fission yeast) protein is 25S rRNA (cytosine-C(5))-methyltransferase rcm1 (rcm1).